A 216-amino-acid polypeptide reads, in one-letter code: Uracil phosphoribosyltransferase (216 aa).

Residues R85, R110, and 135–143 contribute to the 5-phospho-alpha-D-ribose 1-diphosphate site; that span reads DPMVATGYS. Uracil-binding positions include I200 and 205–207; that span reads GDA. Residue D206 coordinates 5-phospho-alpha-D-ribose 1-diphosphate.

The protein belongs to the UPRTase family. The cofactor is Mg(2+).

It catalyses the reaction UMP + diphosphate = 5-phospho-alpha-D-ribose 1-diphosphate + uracil. It functions in the pathway pyrimidine metabolism; UMP biosynthesis via salvage pathway; UMP from uracil: step 1/1. Allosterically activated by GTP. Functionally, catalyzes the conversion of uracil and 5-phospho-alpha-D-ribose 1-diphosphate (PRPP) to UMP and diphosphate. In Paraburkholderia xenovorans (strain LB400), this protein is Uracil phosphoribosyltransferase.